The following is a 193-amino-acid chain: GTP cyclohydrolase-2 (193 aa).

45-49 (RIHSE) provides a ligand contact to GTP. Positions 50, 61, and 63 each coordinate Zn(2+). GTP is bound by residues Gln-66, 87-89 (EGR), and Thr-109. Asp-121 acts as the Proton acceptor in catalysis. Arg-123 functions as the Nucleophile in the catalytic mechanism. GTP is bound by residues Thr-144 and Lys-149.

Belongs to the GTP cyclohydrolase II family. Zn(2+) is required as a cofactor.

The catalysed reaction is GTP + 4 H2O = 2,5-diamino-6-hydroxy-4-(5-phosphoribosylamino)-pyrimidine + formate + 2 phosphate + 3 H(+). The protein operates within cofactor biosynthesis; riboflavin biosynthesis; 5-amino-6-(D-ribitylamino)uracil from GTP: step 1/4. Catalyzes the conversion of GTP to 2,5-diamino-6-ribosylamino-4(3H)-pyrimidinone 5'-phosphate (DARP), formate and pyrophosphate. The polypeptide is GTP cyclohydrolase-2 (Campylobacter hominis (strain ATCC BAA-381 / DSM 21671 / CCUG 45161 / LMG 19568 / NCTC 13146 / CH001A)).